Consider the following 39-residue polypeptide: MANTGRIPLWLVGLVGGLAVITMLGLFIYGSYSGLGSSL.

A helical membrane pass occupies residues 9–29; sequence LWLVGLVGGLAVITMLGLFIY.

It belongs to the PsbJ family. PSII is composed of 1 copy each of membrane proteins PsbA, PsbB, PsbC, PsbD, PsbE, PsbF, PsbH, PsbI, PsbJ, PsbK, PsbL, PsbM, PsbT, PsbX, PsbY, PsbZ, Psb30/Ycf12, at least 3 peripheral proteins of the oxygen-evolving complex and a large number of cofactors. It forms dimeric complexes.

The protein localises to the plastid. The protein resides in the chloroplast thylakoid membrane. In terms of biological role, one of the components of the core complex of photosystem II (PSII). PSII is a light-driven water:plastoquinone oxidoreductase that uses light energy to abstract electrons from H(2)O, generating O(2) and a proton gradient subsequently used for ATP formation. It consists of a core antenna complex that captures photons, and an electron transfer chain that converts photonic excitation into a charge separation. The chain is Photosystem II reaction center protein J from Phaeodactylum tricornutum (strain CCAP 1055/1).